We begin with the raw amino-acid sequence, 139 residues long: Thioredoxin H-type (139 aa).

In terms of domain architecture, Thioredoxin spans glutamate 20–aspartate 132. Active-site nucleophile residues include cysteine 58 and cysteine 61. Cysteines 58 and 61 form a disulfide.

The protein resides in the cytoplasm. Participates in various redox reactions through the reversible oxidation of the active center dithiol to a disulfide. The H form is known to activate a number of cytosolic enzymes. The chain is Thioredoxin H-type from Populus jackii (Balm of Gilead).